A 1523-amino-acid polypeptide reads, in one-letter code: Rho GTPase-activating protein gacHH (1523 aa).

3 Kelch repeats span residues 30–76 (DIVI…YGHS), 83–133 (KMFV…LIYD), and 135–184 (YILI…DISP). Polar residues-rich tracts occupy residues 161-173 (NSWT…SSTG) and 184-194 (PRSSTTTPTHQ). The interval 161-256 (NSWTKPSSNS…GGSPMTTPPT (96 aa)) is disordered. Residues 195–211 (SVNGSNSNSSSSSRVRS) are compositionally biased toward low complexity. Residues 212–221 (ATISSHNNSP) are compositionally biased toward polar residues. Residues 227 to 244 (NNNNNNNNNSNNSNNSNN) show a composition bias toward low complexity. 3 Kelch repeats span residues 335–384 (KAFI…AIGS), 386–441 (LFIF…PISS), and 443–496 (ILII…PITS). Disordered stretches follow at residues 510 to 569 (LPHL…DNIN), 609 to 631 (QSID…VSND), and 647 to 671 (NKNN…NSGS). Residues 615–626 (GGSGGGSGGGNG) show a composition bias toward gly residues. Residues 690 to 729 (CIKKYNSLKDSYLELKQKYQEEREKRLELEKELERYRLSS) adopt a coiled-coil conformation. The disordered stretch occupies residues 748–786 (NINSNNSTTTTTTTTTTTTTPIPLSTSNNNNNNNNNSTL). Positions 812-840 (YEKRVKWKENTEKEANQQLEVIKSKIDLF) form a coiled coil. Disordered stretches follow at residues 861 to 881 (SENI…QNPQ), 905 to 927 (LTPR…PIPL), 963 to 991 (TPQK…SKST), 1006 to 1096 (SGHF…RLGK), and 1143 to 1194 (NGAN…SERI). The span at 870–881 (QQQQQQQQQNPQ) shows a compositional bias: low complexity. Positions 905–915 (LTPRKSRENSV) are enriched in basic and acidic residues. Composition is skewed to low complexity over residues 971 to 981 (PQQQQQQQPPQ), 1012 to 1030 (SSSN…FSNN), 1043 to 1079 (QHQQ…LQTQ), and 1143 to 1153 (NGANNLGGLVL). The stretch at 1151–1228 (LVLTSDKEKE…KKHKKIKGLF (78 aa)) forms a coiled coil. Positions 1155–1194 (SDKEKEKLEKEREKSERIEREKQEKEREKLEKEREKSERI) are enriched in basic and acidic residues. Residues 1233–1411 (SNKESLPFRR…TFIEDFHYIF (179 aa)) form the Rho-GAP domain. The disordered stretch occupies residues 1425–1482 (DDDYDSSSFGSNNTPSSHSPHSSSPTLNPAVTTTTTTTTTTNTTTTTNTTTTPTSATI). Over residues 1430 to 1476 (SSSFGSNNTPSSHSPHSSSPTLNPAVTTTTTTTTTTNTTTTTNTTTT) the composition is skewed to low complexity.

It is found in the cytoplasm. Its function is as follows. Rho GTPase-activating protein involved in the signal transduction pathway. The sequence is that of Rho GTPase-activating protein gacHH (gacHH) from Dictyostelium discoideum (Social amoeba).